A 590-amino-acid chain; its full sequence is Proline--tRNA ligase (590 aa).

This sequence belongs to the class-II aminoacyl-tRNA synthetase family. ProS type 1 subfamily. In terms of assembly, homodimer.

The protein resides in the cytoplasm. The enzyme catalyses tRNA(Pro) + L-proline + ATP = L-prolyl-tRNA(Pro) + AMP + diphosphate. Functionally, catalyzes the attachment of proline to tRNA(Pro) in a two-step reaction: proline is first activated by ATP to form Pro-AMP and then transferred to the acceptor end of tRNA(Pro). As ProRS can inadvertently accommodate and process non-cognate amino acids such as alanine and cysteine, to avoid such errors it has two additional distinct editing activities against alanine. One activity is designated as 'pretransfer' editing and involves the tRNA(Pro)-independent hydrolysis of activated Ala-AMP. The other activity is designated 'posttransfer' editing and involves deacylation of mischarged Ala-tRNA(Pro). The misacylated Cys-tRNA(Pro) is not edited by ProRS. The sequence is that of Proline--tRNA ligase from Leifsonia xyli subsp. xyli (strain CTCB07).